A 606-amino-acid polypeptide reads, in one-letter code: Threonine--tRNA ligase (606 aa).

The catalytic stretch occupies residues 212–503; it reads DHRKLGVEMK…LLEHTAGELP (292 aa). Zn(2+)-binding residues include Cys304, His355, and His480.

The protein belongs to the class-II aminoacyl-tRNA synthetase family. As to quaternary structure, homodimer. It depends on Zn(2+) as a cofactor.

Its subcellular location is the cytoplasm. It catalyses the reaction tRNA(Thr) + L-threonine + ATP = L-threonyl-tRNA(Thr) + AMP + diphosphate + H(+). In terms of biological role, catalyzes the attachment of threonine to tRNA(Thr) in a two-step reaction: L-threonine is first activated by ATP to form Thr-AMP and then transferred to the acceptor end of tRNA(Thr). Also edits incorrectly charged L-seryl-tRNA(Thr). This is Threonine--tRNA ligase from Campylobacter concisus (strain 13826).